Here is a 148-residue protein sequence, read N- to C-terminus: Large ribosomal subunit protein bL9 (148 aa).

Belongs to the bacterial ribosomal protein bL9 family.

Binds to the 23S rRNA. The protein is Large ribosomal subunit protein bL9 of Methylobacillus flagellatus (strain ATCC 51484 / DSM 6875 / VKM B-1610 / KT).